A 287-amino-acid polypeptide reads, in one-letter code: Neugrin (287 aa).

Positions 1 to 23 (MAFSPNVLLGGRVCAAVARSGFA) are cleaved as a signal peptide. Residues 149-169 (SIPELPGPGDSSKPLSAGQSV) form a disordered region. The N-linked (GlcNAc...) asparagine glycan is linked to Asn-202.

This sequence belongs to the neugrin family. As to quaternary structure, forms a regulatory protein-RNA complex, consisting of RCC1L, NGRN, RPUSD3, RPUSD4, TRUB2, FASTKD2 and 16S mt-rRNA. Interacts with 16S mt-rRNA; this interaction is direct.

It is found in the nucleus. The protein localises to the secreted. It localises to the mitochondrion membrane. Functionally, plays an essential role in mitochondrial ribosome biogenesis. As a component of a functional protein-RNA module, consisting of RCC1L, NGRN, RPUSD3, RPUSD4, TRUB2, FASTKD2 and 16S mitochondrial ribosomal RNA (16S mt-rRNA), controls 16S mt-rRNA abundance and is required for intra-mitochondrial translation of core subunits of the oxidative phosphorylation system. This chain is Neugrin (NGRN), found in Bos taurus (Bovine).